The chain runs to 341 residues: DNA-directed RNA polymerase subunit alpha (341 aa).

Positions 1–233 (MVREEVAGST…DLFLPFLHAE (233 aa)) are alpha N-terminal domain (alpha-NTD). Residues 269–341 (IPLNCIFIDQ…IDLLKNKLSF (73 aa)) form an alpha C-terminal domain (alpha-CTD) region.

The protein belongs to the RNA polymerase alpha chain family. In terms of assembly, in plastids the minimal PEP RNA polymerase catalytic core is composed of four subunits: alpha, beta, beta', and beta''. When a (nuclear-encoded) sigma factor is associated with the core the holoenzyme is formed, which can initiate transcription.

The protein localises to the plastid. It is found in the chloroplast. It catalyses the reaction RNA(n) + a ribonucleoside 5'-triphosphate = RNA(n+1) + diphosphate. In terms of biological role, DNA-dependent RNA polymerase catalyzes the transcription of DNA into RNA using the four ribonucleoside triphosphates as substrates. The polypeptide is DNA-directed RNA polymerase subunit alpha (Lolium perenne (Perennial ryegrass)).